The following is an 821-amino-acid chain: DNA replication licensing factor MCM6 (821 aa).

An N-acetylmethionine modification is found at Met1. Ser13, Ser219, and Ser271 each carry phosphoserine. A Phosphothreonine modification is found at Thr278. One can recognise an MCM domain in the interval 346-553 (LYHNLCTSLF…TDYAIARRIV (208 aa)). Residues His359, Ser399, Thr400, Ala401, Lys402, Ser403, and Asn504 each coordinate ATP. The Arginine finger motif lies at 528-531 (SRFD). Residues Arg619 and Glu622 each coordinate ADP. N6-acetyllysine is present on Lys643. The tract at residues 676 to 706 (VDEGPDGINGHADSPAPASGINGHSEDMNQD) is disordered. 2 positions are modified to phosphoserine: Ser689 and Ser762. A Phosphothreonine modification is found at Thr791.

Belongs to the MCM family. In terms of assembly, component of the MCM2-7 complex. The complex forms a toroidal hexameric ring with the proposed subunit order MCM2-MCM6-MCM4-MCM7-MCM3-MCM5. Component of the CMG helicase complex, a hexameric ring of related MCM2-7 subunits stabilized by CDC45 and the tetrameric GINS complex. May interact with MCM10. Interacts with TIPIN. Interacts with CDT1. Interacts with MCMBP. Interacts with DDI2. In terms of processing, O-glycosylated (O-GlcNAcylated), in a cell cycle-dependent manner.

The protein resides in the nucleus. It is found in the chromosome. It catalyses the reaction ATP + H2O = ADP + phosphate + H(+). Its function is as follows. Acts as a component of the MCM2-7 complex (MCM complex) which is the replicative helicase essential for 'once per cell cycle' DNA replication initiation and elongation in eukaryotic cells. Core component of CDC45-MCM-GINS (CMG) helicase, the molecular machine that unwinds template DNA during replication, and around which the replisome is built. The active ATPase sites in the MCM2-7 ring are formed through the interaction surfaces of two neighboring subunits such that a critical structure of a conserved arginine finger motif is provided in trans relative to the ATP-binding site of the Walker A box of the adjacent subunit. The six ATPase active sites, however, are likely to contribute differentially to the complex helicase activity. In Bos taurus (Bovine), this protein is DNA replication licensing factor MCM6 (MCM6).